The following is a 720-amino-acid chain: Glycine--tRNA ligase beta subunit (720 aa).

This sequence belongs to the class-II aminoacyl-tRNA synthetase family. As to quaternary structure, tetramer of two alpha and two beta subunits.

The protein resides in the cytoplasm. It carries out the reaction tRNA(Gly) + glycine + ATP = glycyl-tRNA(Gly) + AMP + diphosphate. This is Glycine--tRNA ligase beta subunit from Dinoroseobacter shibae (strain DSM 16493 / NCIMB 14021 / DFL 12).